The primary structure comprises 40 residues: Photosystem II reaction center protein J (40 aa).

The helical transmembrane segment at 8-28 (IPLWLIGTVTGILVIGLIGFF) threads the bilayer.

The protein belongs to the PsbJ family. In terms of assembly, PSII is composed of 1 copy each of membrane proteins PsbA, PsbB, PsbC, PsbD, PsbE, PsbF, PsbH, PsbI, PsbJ, PsbK, PsbL, PsbM, PsbT, PsbX, PsbY, PsbZ, Psb30/Ycf12, at least 3 peripheral proteins of the oxygen-evolving complex and a large number of cofactors. It forms dimeric complexes.

Its subcellular location is the plastid. The protein localises to the chloroplast thylakoid membrane. One of the components of the core complex of photosystem II (PSII). PSII is a light-driven water:plastoquinone oxidoreductase that uses light energy to abstract electrons from H(2)O, generating O(2) and a proton gradient subsequently used for ATP formation. It consists of a core antenna complex that captures photons, and an electron transfer chain that converts photonic excitation into a charge separation. This is Photosystem II reaction center protein J from Zea mays (Maize).